A 671-amino-acid chain; its full sequence is DNA ligase (671 aa).

NAD(+) is bound by residues 32 to 36, 81 to 82, and E113; these read DAEYD and SL. The active-site N6-AMP-lysine intermediate is K115. NAD(+)-binding residues include R136, E173, K290, and K314. Zn(2+) is bound by residues C408, C411, C426, and C432. A BRCT domain is found at 593–671; the sequence is EIDSPFAGKT…EAEMLRLLGS (79 aa).

It belongs to the NAD-dependent DNA ligase family. LigA subfamily. Mg(2+) is required as a cofactor. Mn(2+) serves as cofactor.

It carries out the reaction NAD(+) + (deoxyribonucleotide)n-3'-hydroxyl + 5'-phospho-(deoxyribonucleotide)m = (deoxyribonucleotide)n+m + AMP + beta-nicotinamide D-nucleotide.. Functionally, DNA ligase that catalyzes the formation of phosphodiester linkages between 5'-phosphoryl and 3'-hydroxyl groups in double-stranded DNA using NAD as a coenzyme and as the energy source for the reaction. It is essential for DNA replication and repair of damaged DNA. The chain is DNA ligase from Escherichia coli (strain SE11).